Here is a 113-residue protein sequence, read N- to C-terminus: U11-theraphotoxin-Hhn1a (113 aa).

A signal peptide spans 1–21 (MNTVRVTFLLVFVLAVSLGQA). The propeptide occupies 22–74 (DKDENRMEMQEKTEQGRSYLDFAENLLLQKLEELEAKLLEEDSEESRNSRQKR). A disordered region spans residues 61 to 83 (EEDSEESRNSRQKRCIGEGVPCD). 3 cysteine pairs are disulfide-bonded: C75–C90, C82–C95, and C89–C110.

This sequence belongs to the neurotoxin 14 (magi-1) family. 01 (HNTX-16) subfamily. As to expression, expressed by the venom gland.

It is found in the secreted. In terms of biological role, probable ion channel inhibitor. This Cyriopagopus hainanus (Chinese bird spider) protein is U11-theraphotoxin-Hhn1a.